The primary structure comprises 369 residues: Type 2 DNA topoisomerase 6 subunit A (369 aa).

Positions K10–S146 constitute a Topo IIA-type catalytic domain. Y103 acts as the O-(5'-phospho-DNA)-tyrosine intermediate in catalysis. Mg(2+) is bound by residues E197 and D249.

Belongs to the TOP6A family. In terms of assembly, homodimer. Heterotetramer of two Top6A and two Top6B chains. It depends on Mg(2+) as a cofactor.

The catalysed reaction is ATP-dependent breakage, passage and rejoining of double-stranded DNA.. In terms of biological role, relaxes both positive and negative superturns and exhibits a strong decatenase activity. This is Type 2 DNA topoisomerase 6 subunit A from Methanocaldococcus jannaschii (strain ATCC 43067 / DSM 2661 / JAL-1 / JCM 10045 / NBRC 100440) (Methanococcus jannaschii).